A 123-amino-acid polypeptide reads, in one-letter code: NHL-repeat-containing protein 4 (123 aa).

NHL repeat units follow at residues 35–78 and 79–119; these read QPLG…FPRA and GPPI…YQGL.

In Homo sapiens (Human), this protein is NHL-repeat-containing protein 4 (NHLRC4).